Reading from the N-terminus, the 100-residue chain is Small ribosomal subunit protein bS20 (100 aa).

Basic residues predominate over residues 1–22 (MASGKPKKKNPRLASGRKRARQ). The disordered stretch occupies residues 1 to 26 (MASGKPKKKNPRLASGRKRARQGLKL).

It belongs to the bacterial ribosomal protein bS20 family.

In terms of biological role, binds directly to 16S ribosomal RNA. The protein is Small ribosomal subunit protein bS20 of Acidovorax ebreus (strain TPSY) (Diaphorobacter sp. (strain TPSY)).